Here is an 89-residue protein sequence, read N- to C-terminus: Class I hydrophobin C (89 aa).

The N-terminal stretch at 1-16 is a signal peptide; that stretch reads MKFSLATIALAAAVAA. 4 disulfides stabilise this stretch: Cys-28–Cys-68, Cys-39–Cys-60, Cys-40–Cys-52, and Cys-69–Cys-85. The N-linked (GlcNAc...) asparagine glycan is linked to Asn-36.

Belongs to the fungal hydrophobin family.

Its subcellular location is the secreted. The protein localises to the cell wall. It is found in the vacuole. It localises to the cytoplasmic vesicle. Its function is as follows. Aerial growth, conidiation, and dispersal of filamentous fungi in the environment rely upon a capability of their secreting small amphipathic proteins called hydrophobins (HPBs) with low sequence identity. Class I can self-assemble into an outermost layer of rodlet bundles on aerial cell surfaces, conferring cellular hydrophobicity that supports fungal growth, development and dispersal; whereas Class II form highly ordered films at water-air interfaces through intermolecular interactions but contribute nothing to the rodlet structure. Hyd1C contributes to certain cell wall-related features, such as hydrophobicity but is not involved in cell wall-related events during fungal proliferation in host hemocoel. Does not contribute to conidial hydrophobicity. This Beauveria bassiana (strain ARSEF 2860) (White muscardine disease fungus) protein is Class I hydrophobin C.